A 153-amino-acid polypeptide reads, in one-letter code: ATP synthase subunit b' (153 aa).

The helical transmembrane segment at 20-40 (TLPLMAVQVVLLTFILNALFF) threads the bilayer.

It belongs to the ATPase B chain family. As to quaternary structure, F-type ATPases have 2 components, F(1) - the catalytic core - and F(0) - the membrane proton channel. F(1) has five subunits: alpha(3), beta(3), gamma(1), delta(1), epsilon(1). F(0) has four main subunits: a(1), b(1), b'(1) and c(10-14). The alpha and beta chains form an alternating ring which encloses part of the gamma chain. F(1) is attached to F(0) by a central stalk formed by the gamma and epsilon chains, while a peripheral stalk is formed by the delta, b and b' chains.

Its subcellular location is the cellular thylakoid membrane. In terms of biological role, f(1)F(0) ATP synthase produces ATP from ADP in the presence of a proton or sodium gradient. F-type ATPases consist of two structural domains, F(1) containing the extramembraneous catalytic core and F(0) containing the membrane proton channel, linked together by a central stalk and a peripheral stalk. During catalysis, ATP synthesis in the catalytic domain of F(1) is coupled via a rotary mechanism of the central stalk subunits to proton translocation. Functionally, component of the F(0) channel, it forms part of the peripheral stalk, linking F(1) to F(0). The b'-subunit is a diverged and duplicated form of b found in plants and photosynthetic bacteria. In Prochlorococcus marinus (strain NATL1A), this protein is ATP synthase subunit b'.